Here is a 191-residue protein sequence, read N- to C-terminus: Chorion class B protein Ld10 (191 aa).

The signal sequence occupies residues 1-21; sequence MSAKIILVFCAQALFVQSALS.

It belongs to the chorion protein family.

In terms of biological role, this protein is one of many from the eggshell of the gypsy moth. The chain is Chorion class B protein Ld10 from Lymantria dispar (Gypsy moth).